The sequence spans 24 residues: Brevinin-1BYc (24 aa).

A disulfide bridge links C18 with C24.

In terms of tissue distribution, expressed by the skin glands.

Its subcellular location is the secreted. Its function is as follows. Antibacterial activity against Gram-positive bacterium S.aureus. Weak antifungal activity against C.albicans. The polypeptide is Brevinin-1BYc (Rana boylii (Foothill yellow-legged frog)).